A 248-amino-acid polypeptide reads, in one-letter code: Probable transcriptional regulatory protein RPB_4273 (248 aa).

A disordered region spans residues 1-22; that stretch reads MAGHSQFKNIMHRKGKQDAQRS.

Belongs to the TACO1 family.

The protein localises to the cytoplasm. The chain is Probable transcriptional regulatory protein RPB_4273 from Rhodopseudomonas palustris (strain HaA2).